The following is a 359-amino-acid chain: Thymidine kinase (359 aa).

ATP is bound at residue 17-24; sequence GAHGLGKT. Glu-45 serves as the catalytic Proton acceptor. A substrate-binding site is contributed by Gln-99. Arg-187 is an ATP binding site. Arg-193 lines the substrate pocket.

Belongs to the herpesviridae thymidine kinase family. As to quaternary structure, homodimer.

The enzyme catalyses thymidine + ATP = dTMP + ADP + H(+). Its function is as follows. Catalyzes the transfer of the gamma-phospho group of ATP to thymidine to generate dTMP in the salvage pathway of pyrimidine synthesis. The dTMP serves as a substrate for DNA polymerase during viral DNA replication. Allows the virus to be reactivated and to grow in non-proliferative cells lacking a high concentration of phosphorylated nucleic acid precursors. The sequence is that of Thymidine kinase from Bos taurus (Bovine).